Consider the following 156-residue polypeptide: Transcription antitermination protein NusB (156 aa).

The protein belongs to the NusB family.

In terms of biological role, involved in transcription antitermination. Required for transcription of ribosomal RNA (rRNA) genes. Binds specifically to the boxA antiterminator sequence of the ribosomal RNA (rrn) operons. This is Transcription antitermination protein NusB from Rickettsia bellii (strain OSU 85-389).